A 234-amino-acid chain; its full sequence is t-SNARE protein aex-4 (234 aa).

2 t-SNARE coiled-coil homology domains span residues 37 to 99 and 170 to 232; these read AKLN…ITAM and DAIE…VKKL.

This sequence belongs to the SNAP-25 family. Expressed in intestinal cells.

It localises to the cell membrane. Functionally, t-SNARE protein which regulates the secretion of aex-5 from intestinal cells. Involved in the defecation motor program, which is a coordinated series of three muscle contractions that occurs every 45 seconds. The chain is t-SNARE protein aex-4 from Caenorhabditis elegans.